Reading from the N-terminus, the 309-residue chain is Homoserine kinase (309 aa).

An ATP-binding site is contributed by 91–101 (PIGSGLGSSAC).

Belongs to the GHMP kinase family. Homoserine kinase subfamily.

Its subcellular location is the cytoplasm. It carries out the reaction L-homoserine + ATP = O-phospho-L-homoserine + ADP + H(+). The protein operates within amino-acid biosynthesis; L-threonine biosynthesis; L-threonine from L-aspartate: step 4/5. Its function is as follows. Catalyzes the ATP-dependent phosphorylation of L-homoserine to L-homoserine phosphate. In Klebsiella pneumoniae (strain 342), this protein is Homoserine kinase.